A 107-amino-acid chain; its full sequence is Large ribosomal subunit protein P2 (107 aa).

Residues 86-107 (PAAAAAEAEEEDDDDMGFGLFD) are disordered. Positions 92 to 101 (EAEEEDDDDM) are enriched in acidic residues.

The protein belongs to the eukaryotic ribosomal protein P1/P2 family. As to quaternary structure, P1 and P2 exist as dimers at the large ribosomal subunit. Phosphorylated.

In terms of biological role, plays an important role in the elongation step of protein synthesis. The chain is Large ribosomal subunit protein P2 from Trypanosoma brucei brucei.